The sequence spans 215 residues: 16S rRNA (adenine(1408)-N(1))-methyltransferase (215 aa).

S-adenosyl-L-methionine-binding positions include Gly32, Asp55, 87–88, 102–107, and 191–193; these read AE, LMPWGS, and TSW.

Belongs to the methyltransferase superfamily. Kanamycin-apramycin resistance family.

The catalysed reaction is adenosine(1408) in 16S rRNA + S-adenosyl-L-methionine = N(1)-methyladenosine(1408) in 16S rRNA + S-adenosyl-L-homocysteine + H(+). Its function is as follows. Specifically methylates the N(1) position of adenine 1408 in 16S rRNA. Confers resistance to various aminoglycosides. The chain is 16S rRNA (adenine(1408)-N(1))-methyltransferase (kamB) from Streptoalloteichus hindustanus.